The chain runs to 369 residues: Homoserine O-succinyltransferase (369 aa).

The AB hydrolase-1 domain occupies 49 to 328 (NAVFICHALT…RFDSTQSARM (280 aa)). The active-site Nucleophile is the Ser154. Substrate is bound at residue Arg224. Catalysis depends on residues Asp317 and His350. Asp351 provides a ligand contact to substrate.

The protein belongs to the AB hydrolase superfamily. MetX family. Homodimer.

It localises to the cytoplasm. The enzyme catalyses L-homoserine + succinyl-CoA = O-succinyl-L-homoserine + CoA. It participates in amino-acid biosynthesis; L-methionine biosynthesis via de novo pathway; O-succinyl-L-homoserine from L-homoserine: step 1/1. Its function is as follows. Transfers a succinyl group from succinyl-CoA to L-homoserine, forming succinyl-L-homoserine. In Nocardioides sp. (strain ATCC BAA-499 / JS614), this protein is Homoserine O-succinyltransferase.